Here is a 537-residue protein sequence, read N- to C-terminus: Glutamyl-tRNA(Gln) amidotransferase subunit A, chloroplastic/mitochondrial (537 aa).

Active-site charge relay system residues include K116 and S191. The active-site Acyl-ester intermediate is the S215.

Belongs to the amidase family. GatA subfamily. In terms of assembly, subunit of the heterotrimeric GatCAB amidotransferase (AdT) complex, composed of A, B and C subunits.

It is found in the mitochondrion. Its subcellular location is the plastid. It localises to the chloroplast stroma. It carries out the reaction L-glutamyl-tRNA(Gln) + L-glutamine + ATP + H2O = L-glutaminyl-tRNA(Gln) + L-glutamate + ADP + phosphate + H(+). Allows the formation of correctly charged Gln-tRNA(Gln) through the transamidation of misacylated Glu-tRNA(Gln) in chloroplasts and mitochondria. The reaction takes place in the presence of glutamine and ATP through an activated gamma-phospho-Glu-tRNA(Gln). This Arabidopsis thaliana (Mouse-ear cress) protein is Glutamyl-tRNA(Gln) amidotransferase subunit A, chloroplastic/mitochondrial.